A 489-amino-acid polypeptide reads, in one-letter code: Homoserine O-acetyltransferase (489 aa).

Positions 47 to 354 constitute an AB hydrolase-1 domain; it reads NAILVCHALT…NYGHDSFLLE (308 aa). The Nucleophile role is filled by Ser152. Residue Arg221 coordinates substrate. Residues Asp315 and His348 contribute to the active site. Residue Asp349 coordinates substrate. 2 consecutive CBS domains span residues 375–434 and 436–489; these read MIED…NLEE and MTKN…IEEF.

The protein belongs to the AB hydrolase superfamily. MetX family. Homodimer.

Its subcellular location is the cytoplasm. The catalysed reaction is L-homoserine + acetyl-CoA = O-acetyl-L-homoserine + CoA. The protein operates within amino-acid biosynthesis; L-methionine biosynthesis via de novo pathway; O-acetyl-L-homoserine from L-homoserine: step 1/1. In terms of biological role, transfers an acetyl group from acetyl-CoA to L-homoserine, forming acetyl-L-homoserine. The chain is Homoserine O-acetyltransferase from Methanohalobium evestigatum (strain ATCC BAA-1072 / DSM 3721 / NBRC 107634 / OCM 161 / Z-7303).